A 493-amino-acid chain; its full sequence is (+)-menthofuran synthase (493 aa).

Methionine 1 is a topological domain (cytoplasmic). Residues 2–19 (AALLVFFSVSLILLAVLF) form a helical; Signal-anchor for type II membrane protein membrane-spanning segment. Over 20 to 493 (HKRKSSLSSR…LLVLATPRQS (474 aa)) the chain is Lumenal. N-linked (GlcNAc...) asparagine glycosylation is present at asparagine 169. Cysteine 434 is a binding site for heme.

Belongs to the cytochrome P450 family. Heme serves as cofactor.

The protein resides in the membrane. It carries out the reaction (R)-pulegone + reduced [NADPH--hemoprotein reductase] + O2 = (R)-menthofuran + oxidized [NADPH--hemoprotein reductase] + 2 H2O + H(+). It participates in secondary metabolite biosynthesis; terpenoid biosynthesis. Monoterpene synthase that catalyzes the formation of (+)-menthofuran from (+)-pulegone. This Mentha piperita (Peppermint) protein is (+)-menthofuran synthase.